The sequence spans 808 residues: Transcription activator of gluconeogenesis PAAG_01030 (808 aa).

The segment at 1–90 (MTSSVRNGSP…SAKDPLRPRR (90 aa)) is disordered. A compositionally biased stretch (low complexity) spans 69–83 (STSSTAASANNASAK). Positions 97-125 (CFACQRAHLTCGDERPCQRCIKRGLQDTC) form a DNA-binding region, zn(2)-C6 fungal-type. Residues 158–170 (AARNKVNSNSQQR) are compositionally biased toward polar residues. 5 disordered regions span residues 158–203 (AARN…FSTP), 236–285 (SAFQ…YGST), 322–387 (GAGD…IYNQ), 442–461 (PPTN…STPS), and 598–629 (TGGS…DNQS). Residues 171-188 (NGTNSNSDNNSTNTNSNN) show a composition bias toward low complexity. 4 stretches are compositionally biased toward polar residues: residues 189–203 (KPSH…FSTP), 248–279 (FDLS…SQNP), 339–359 (GRSS…NQSP), and 377–387 (GPTNPRNIYNQ). Composition is skewed to low complexity over residues 442–451 (PPTNTQHQQQ) and 598–619 (TGGS…SRNS). A compositionally biased stretch (polar residues) spans 620–629 (ATTTVMDNQS).

It belongs to the ERT1/acuK family.

Its subcellular location is the nucleus. Transcription factor which regulates nonfermentable carbon utilization. Activator of gluconeogenetic genes. This is Transcription activator of gluconeogenesis PAAG_01030 from Paracoccidioides lutzii (strain ATCC MYA-826 / Pb01) (Paracoccidioides brasiliensis).